A 314-amino-acid chain; its full sequence is Oxidoreductase NAD-binding domain-containing protein 1 (314 aa).

A signal peptide spans 1-18 (MALVAGSAAYQVLRGVTG). The 104-residue stretch at 63–166 (EIISPAKVCE…VGGEFCFDPQ (104 aa)) folds into the FAD-binding FR-type domain. An NAD(+)-binding site is contributed by 180–185 (GVGINP).

This Xenopus tropicalis (Western clawed frog) protein is Oxidoreductase NAD-binding domain-containing protein 1 (oxnad1).